The sequence spans 577 residues: Acyl-coenzyme A synthetase ACSM2A, mitochondrial (577 aa).

The transit peptide at 1 to 46 directs the protein to the mitochondrion; the sequence is MHWLRKVQGLCTLWGTQMSSRTLYINSRQLVSLQWGHQEVPAKFNF. Glutamine 139 contacts CoA. ATP-binding positions include 221 to 229, 359 to 364, aspartate 446, and arginine 461; these read TSGTSGLPK and ESYGQT. Residue threonine 364 participates in substrate binding. 469–471 contributes to the CoA binding site; it reads SGY. Residue arginine 472 coordinates substrate. Arginine 501 contributes to the CoA binding site. Phosphoserine is present on serine 513. CoA is bound by residues lysine 532 and 540-542; that span reads YPR. Residue lysine 557 participates in ATP binding.

This sequence belongs to the ATP-dependent AMP-binding enzyme family. As to quaternary structure, monomer. It depends on Mg(2+) as a cofactor. The cofactor is Mn(2+).

Its subcellular location is the mitochondrion. It carries out the reaction a medium-chain fatty acid + ATP + CoA = a medium-chain fatty acyl-CoA + AMP + diphosphate. It catalyses the reaction benzoate + ATP + CoA = benzoyl-CoA + AMP + diphosphate. The catalysed reaction is hexanoate + ATP + CoA = hexanoyl-CoA + AMP + diphosphate. The enzyme catalyses butanoate + ATP + CoA = butanoyl-CoA + AMP + diphosphate. It carries out the reaction octanoate + ATP + CoA = octanoyl-CoA + AMP + diphosphate. It catalyses the reaction decanoate + ATP + CoA = decanoyl-CoA + AMP + diphosphate. In terms of biological role, catalyzes the activation of fatty acids by CoA to produce an acyl-CoA, the first step in fatty acid metabolism. Capable of activating medium-chain fatty acids (e.g. butyric (C4) to decanoic (C10) acids), and certain carboxylate-containing xenobiotics, e.g. benzoate. This is Acyl-coenzyme A synthetase ACSM2A, mitochondrial (ACSM2A) from Homo sapiens (Human).